A 268-amino-acid polypeptide reads, in one-letter code: MVSLTTCCLKNIVNQHAHVENTVLLYHLGLRWNCKTLYQCTQCNGINYTNSHSDQCKNKDLFLMKVIVKKNLAVARTLLSWGASPEYARLFCRNTEEEQALNVQHVADMSSSKILERLTMSYKENDEQLLITFYLLNLSTNFSTNLREQVRFNIVSYIICDLAIHQTFKTFYAKNYSLSTLYCIFLAIYYKLYTALRKMVKIYPGLKPFVYLTGFIFDDETVMETYNSTDDEISECKNRIIAIKGCYGNFHCRSDIDHMYAFSQNDYW.

Residues 1–175 lie on the Cytoplasmic side of the membrane; that stretch reads MVSLTTCCLK…QTFKTFYAKN (175 aa). A helical transmembrane segment spans residues 176–193; that stretch reads YSLSTLYCIFLAIYYKLY. Over 194–268 the chain is Extracellular; sequence TALRKMVKIY…MYAFSQNDYW (75 aa).

The protein belongs to the asfivirus MGF 300 family.

The protein resides in the host membrane. Plays a role in virus cell tropism, and may be required for efficient virus replication in macrophages. This chain is Protein MGF 300-1L, found in Ornithodoros (relapsing fever ticks).